We begin with the raw amino-acid sequence, 287 residues long: Bifunctional protein FolD (287 aa).

NADP(+)-binding positions include 165–167 (NRS), serine 190, and isoleucine 233.

It belongs to the tetrahydrofolate dehydrogenase/cyclohydrolase family. In terms of assembly, homodimer.

The catalysed reaction is (6R)-5,10-methylene-5,6,7,8-tetrahydrofolate + NADP(+) = (6R)-5,10-methenyltetrahydrofolate + NADPH. It catalyses the reaction (6R)-5,10-methenyltetrahydrofolate + H2O = (6R)-10-formyltetrahydrofolate + H(+). Its pathway is one-carbon metabolism; tetrahydrofolate interconversion. Its function is as follows. Catalyzes the oxidation of 5,10-methylenetetrahydrofolate to 5,10-methenyltetrahydrofolate and then the hydrolysis of 5,10-methenyltetrahydrofolate to 10-formyltetrahydrofolate. In Nitrosopumilus maritimus (strain SCM1), this protein is Bifunctional protein FolD.